Here is a 247-residue protein sequence, read N- to C-terminus: Proteasome subunit alpha (247 aa).

This sequence belongs to the peptidase T1A family. In terms of assembly, the 20S proteasome core is composed of 14 alpha and 14 beta subunits that assemble into four stacked heptameric rings, resulting in a barrel-shaped structure. The two inner rings, each composed of seven catalytic beta subunits, are sandwiched by two outer rings, each composed of seven alpha subunits. The catalytic chamber with the active sites is on the inside of the barrel. Has a gated structure, the ends of the cylinder being occluded by the N-termini of the alpha-subunits. Is capped at one or both ends by the proteasome regulatory ATPase, PAN.

The protein localises to the cytoplasm. The formation of the proteasomal ATPase PAN-20S proteasome complex, via the docking of the C-termini of PAN into the intersubunit pockets in the alpha-rings, triggers opening of the gate for substrate entry. Interconversion between the open-gate and close-gate conformations leads to a dynamic regulation of the 20S proteasome proteolysis activity. Functionally, component of the proteasome core, a large protease complex with broad specificity involved in protein degradation. In Methanosarcina acetivorans (strain ATCC 35395 / DSM 2834 / JCM 12185 / C2A), this protein is Proteasome subunit alpha.